We begin with the raw amino-acid sequence, 553 residues long: Putative ABC transporter ATP-binding protein BCE_3323 (553 aa).

ABC transporter domains follow at residues 7 to 245 (AEIN…FRPF) and 295 to 527 (LSAE…SINR). Residues 41–48 (GGSGSGKT) and 329–336 (GKNGTGKS) each bind ATP.

It belongs to the ABC transporter superfamily.

It localises to the cell membrane. Its function is as follows. Probably part of an ABC transporter complex. Responsible for energy coupling to the transport system. The polypeptide is Putative ABC transporter ATP-binding protein BCE_3323 (Bacillus cereus (strain ATCC 10987 / NRS 248)).